The following is a 176-amino-acid chain: MTNIRKSHPLIKIVNDAFIDLPAPSNISSWWNFGSLLGVCLTVQILTGLFLAMHYTSDTATAFNSVTHICRDVNYGWLLRYLHANGASMFFICLYLHVGRGLYYGSYTYTETWNVGVILLFAVMATAFMGYVLPWGQMSFWGATVITNLLSAIPYIGTDLVEWIWGGFSVDKATLT.

3 helical membrane-spanning segments follow: residues 33 to 53, 77 to 98, and 113 to 133; these read FGSLLGVCLTVQILTGLFLAM, WLLRYLHANGASMFFICLYLHV, and WNVGVILLFAVMATAFMGYVL. Histidine 83 and histidine 97 together coordinate heme b.

Belongs to the cytochrome b family. In terms of assembly, the cytochrome bc1 complex contains 11 subunits: 3 respiratory subunits (MT-CYB, CYC1 and UQCRFS1), 2 core proteins (UQCRC1 and UQCRC2) and 6 low-molecular weight proteins (UQCRH/QCR6, UQCRB/QCR7, UQCRQ/QCR8, UQCR10/QCR9, UQCR11/QCR10 and a cleavage product of UQCRFS1). This cytochrome bc1 complex then forms a dimer. Heme b is required as a cofactor.

It localises to the mitochondrion inner membrane. In terms of biological role, component of the ubiquinol-cytochrome c reductase complex (complex III or cytochrome b-c1 complex) that is part of the mitochondrial respiratory chain. The b-c1 complex mediates electron transfer from ubiquinol to cytochrome c. Contributes to the generation of a proton gradient across the mitochondrial membrane that is then used for ATP synthesis. The polypeptide is Cytochrome b (MT-CYB) (Mormopterus kalinowskii (Kalinowski's mastiff bat)).